Here is a 100-residue protein sequence, read N- to C-terminus: Putative pterin-4-alpha-carbinolamine dehydratase (100 aa).

It belongs to the pterin-4-alpha-carbinolamine dehydratase family.

The catalysed reaction is (4aS,6R)-4a-hydroxy-L-erythro-5,6,7,8-tetrahydrobiopterin = (6R)-L-erythro-6,7-dihydrobiopterin + H2O. The sequence is that of Putative pterin-4-alpha-carbinolamine dehydratase from Bradyrhizobium diazoefficiens (strain JCM 10833 / BCRC 13528 / IAM 13628 / NBRC 14792 / USDA 110).